The chain runs to 277 residues: S-formylglutathione hydrolase FrmB (277 aa).

Active-site charge relay system residues include Ser-145, Asp-221, and His-254.

Belongs to the esterase D family.

The catalysed reaction is S-formylglutathione + H2O = formate + glutathione + H(+). Serine hydrolase involved in the detoxification of formaldehyde. Hydrolyzes S-formylglutathione to glutathione and formate. The chain is S-formylglutathione hydrolase FrmB (frmB) from Escherichia coli O157:H7.